Here is a 608-residue protein sequence, read N- to C-terminus: Aspartate--tRNA(Asp/Asn) ligase (608 aa).

Glutamate 187 contacts L-aspartate. The aspartate stretch occupies residues 211–214; it reads QQFK. The L-aspartate site is built by arginine 233 and histidine 461. Residue 233-235 coordinates ATP; the sequence is RDE. ATP is bound at residue glutamate 495. Arginine 502 is a binding site for L-aspartate. 547–550 contributes to the ATP binding site; it reads GLDR.

Belongs to the class-II aminoacyl-tRNA synthetase family. Type 1 subfamily. Homodimer.

It is found in the cytoplasm. It catalyses the reaction tRNA(Asx) + L-aspartate + ATP = L-aspartyl-tRNA(Asx) + AMP + diphosphate. Functionally, aspartyl-tRNA synthetase with relaxed tRNA specificity since it is able to aspartylate not only its cognate tRNA(Asp) but also tRNA(Asn). Reaction proceeds in two steps: L-aspartate is first activated by ATP to form Asp-AMP and then transferred to the acceptor end of tRNA(Asp/Asn). The sequence is that of Aspartate--tRNA(Asp/Asn) ligase from Prosthecochloris aestuarii (strain DSM 271 / SK 413).